A 417-amino-acid chain; its full sequence is MQTYLVGGAVRDYLLGLPVKDRDWVVVGADAQTMLAQGFQPVGKDFPVFLHPETHEEYTLARTERKTAKGYVGFSFHADKDVTLEQDLMRRDLTINAMAQDADGKIIDPFGGQRDLAAGILRHVSPAFAEDPVRILRTARFAARYRFEIAEETIKLMRQMVENGEADALVAERVWQEFAKGLMEKNPRKMIEVLRECGALKVLLPEVNALFGVPQRADYHPEIDSGIHTLMTLQRAADMGLSLPERYAALLHDLGKAKTPSDILPRHHGHDLAGVEPVREVNQRLRAPKHCAELAELVCRWHIIFHQVGQLKSQTILNVLKKTDAFRRPERFQTALNVCIADTQGRLNREHTPYPQRAHWFALLEAANQADSGKIAAECRAQGKAHLIAEQIDRARLAQIAPLQKTFRAAQDKTEKH.

ATP contacts are provided by Gly-8 and Arg-11. CTP-binding residues include Gly-8 and Arg-11. Mg(2+)-binding residues include Asp-21 and Asp-23. The ATP site is built by Arg-91, Arg-137, and Arg-140. Arg-91, Arg-137, and Arg-140 together coordinate CTP. The HD domain maps to 225–326; the sequence is SGIHTLMTLQ…LNVLKKTDAF (102 aa).

The protein belongs to the tRNA nucleotidyltransferase/poly(A) polymerase family. Bacterial CCA-adding enzyme type 1 subfamily. In terms of assembly, monomer. Can also form homodimers and oligomers. Mg(2+) is required as a cofactor. Requires Ni(2+) as cofactor.

It catalyses the reaction a tRNA precursor + 2 CTP + ATP = a tRNA with a 3' CCA end + 3 diphosphate. It carries out the reaction a tRNA with a 3' CCA end + 2 CTP + ATP = a tRNA with a 3' CCACCA end + 3 diphosphate. Functionally, catalyzes the addition and repair of the essential 3'-terminal CCA sequence in tRNAs without using a nucleic acid template. Adds these three nucleotides in the order of C, C, and A to the tRNA nucleotide-73, using CTP and ATP as substrates and producing inorganic pyrophosphate. tRNA 3'-terminal CCA addition is required both for tRNA processing and repair. Also involved in tRNA surveillance by mediating tandem CCA addition to generate a CCACCA at the 3' terminus of unstable tRNAs. While stable tRNAs receive only 3'-terminal CCA, unstable tRNAs are marked with CCACCA and rapidly degraded. The polypeptide is Multifunctional CCA protein (Neisseria meningitidis serogroup C / serotype 2a (strain ATCC 700532 / DSM 15464 / FAM18)).